The primary structure comprises 155 residues: UPF0251 protein Paes_1249 (155 aa).

The protein belongs to the UPF0251 family.

The chain is UPF0251 protein Paes_1249 from Prosthecochloris aestuarii (strain DSM 271 / SK 413).